We begin with the raw amino-acid sequence, 215 residues long: Probable phosphoglycerate mutase GpmB (215 aa).

Substrate contacts are provided by residues 8 to 15 (RHGETQWN), 21 to 22 (QG), R58, R60, 82 to 85 (ELNM), 104 to 105 (RR), and 151 to 152 (GI). The active-site Tele-phosphohistidine intermediate is H9. E82 acts as the Proton donor/acceptor in catalysis.

The protein belongs to the phosphoglycerate mutase family. GpmB subfamily.

It catalyses the reaction (2R)-2-phosphoglycerate = (2R)-3-phosphoglycerate. It participates in carbohydrate degradation; glycolysis; pyruvate from D-glyceraldehyde 3-phosphate: step 3/5. The chain is Probable phosphoglycerate mutase GpmB from Shigella dysenteriae serotype 1 (strain Sd197).